Reading from the N-terminus, the 1706-residue chain is DDT domain-containing protein PTM (1706 aa).

Positions 1-16 (MEAKVPRPRGRPRKRQ) are enriched in basic residues. 2 disordered regions span residues 1–27 (MEAK…KLNN) and 144–168 (VTNS…RGSD). The Nuclear localization signal signature appears at 9–18 (RGRPRKRQRL). The segment covering 148–160 (EDGDSYSDSESSE) has biased composition (acidic residues). One can recognise a DDT domain in the interval 192–252 (EEAVAHLLSV…LRALKGHLER (61 aa)). A compositionally biased stretch (basic and acidic residues) spans 375–393 (YKEKEVTDSSTNESKDLDS). Positions 375–408 (YKEKEVTDSSTNESKDLDSRCTNGGSNEVSSDLD) are disordered. The span at 394-408 (RCTNGGSNEVSSDLD) shows a compositional bias: polar residues. The segment at 411 to 458 (SDECRICGMDGTLLCCDGCPLAYHSRCIGVVKMYIPDGPWFCPECTIN) adopts a PHD-type 1 zinc-finger fold. Disordered regions lie at residues 1165-1194 (KPPS…SVSK) and 1311-1345 (TNQK…PATP). Polar residues-rich tracts occupy residues 1167–1194 (PSQQ…SVSK) and 1311–1323 (TNQK…SGLD). The segment covering 1325–1336 (DSERMSEQKDSK) has biased composition (basic and acidic residues). A run of 5 helical transmembrane segments spans residues 1539–1559 (ALGS…SILP), 1569–1589 (LAGP…GLFL), 1596–1616 (ANDL…LGLI), 1624–1644 (AALH…WCGL), and 1682–1702 (MLGL…YVLI).

In terms of assembly, interacts (via the DDT domain) with CHR11 (via C-terminus).

It localises to the plastid. Its subcellular location is the chloroplast outer membrane. It is found in the nucleus. In terms of biological role, membrane-bound transcription factor required for the plastid-to-nucleus retrograde signaling. Functions in multiple retrograde pathways. The plastid-to-nucleus signal plays an important role in the coordinated expression of both nuclear- and chloroplast-localized genes that encode photosynthesis-related proteins. In the nucleus, activates ABI4 transcription in a PHD-dependent manner associated with histone modifications. Localized primarily in the chloroplast outer membrane as dormant form and, in response to retrograde signals, is released from the membrane through proteolytic cleavage and its cleaved fragment containing the transcription factor domain is redistributed to the nucleus, where it regulates the expression of particular nuclear genes. The chain is DDT domain-containing protein PTM from Arabidopsis thaliana (Mouse-ear cress).